We begin with the raw amino-acid sequence, 231 residues long: Homeobox protein EMX1 (231 aa).

Residues 133-192 (PKRIRTAFSPSQLLRLERAFEKNHYVVGAERKQLANSLSLSETQVKVWFQNRRTKYKRQK) constitute a DNA-binding region (homeobox). A disordered region spans residues 193–231 (LEEEGPECTQKKKGNHHINRWRIATKQTGSEDIDVMSDA). Over residues 203-212 (KKKGNHHINR) the composition is skewed to basic residues.

The protein belongs to the EMX homeobox family.

The protein resides in the nucleus. In terms of biological role, may function in combinations with OTX1/2 to specify cell fates in the developing central nervous system. In Danio rerio (Zebrafish), this protein is Homeobox protein EMX1 (emx1).